The following is a 447-amino-acid chain: Elongation factor 1-alpha (447 aa).

In terms of domain architecture, tr-type G spans 5–230 (KTHINIVVIG…DQINEPKRPS (226 aa)). The interval 14 to 21 (GHVDSGKS) is G1. A GTP-binding site is contributed by 14 to 21 (GHVDSGKS). Lysine 55 is subject to N6,N6-dimethyllysine. The interval 70 to 74 (GITID) is G2. Lysine 79 carries the N6,N6,N6-trimethyllysine modification. Residues 91-94 (DAPG) are G3. GTP-binding positions include 91 to 95 (DAPGH) and 153 to 156 (NKMD). Residues 153–156 (NKMD) form a G4 region. Lysine 187 bears the N6,N6,N6-trimethyllysine mark. The segment at 194–196 (SGF) is G5. Residue lysine 261 is modified to N6-methyllysine. Position 289 is a 5-glutamyl glycerylphosphorylethanolamine (glutamate 289). Lysine 306 bears the N6,N6,N6-trimethyllysine mark. The residue at position 362 (glutamate 362) is a 5-glutamyl glycerylphosphorylethanolamine. Position 396 is an N6,N6,N6-trimethyllysine (lysine 396).

Belongs to the TRAFAC class translation factor GTPase superfamily. Classic translation factor GTPase family. EF-Tu/EF-1A subfamily.

It localises to the cytoplasm. Its function is as follows. This protein promotes the GTP-dependent binding of aminoacyl-tRNA to the A-site of ribosomes during protein biosynthesis. The chain is Elongation factor 1-alpha (REFA1) from Oryza sativa subsp. japonica (Rice).